A 393-amino-acid polypeptide reads, in one-letter code: NADH-quinone oxidoreductase subunit D (393 aa).

The protein belongs to the complex I 49 kDa subunit family. In terms of assembly, NDH-1 is composed of 14 different subunits. Subunits NuoB, C, D, E, F, and G constitute the peripheral sector of the complex.

Its subcellular location is the cell inner membrane. It catalyses the reaction a quinone + NADH + 5 H(+)(in) = a quinol + NAD(+) + 4 H(+)(out). Its function is as follows. NDH-1 shuttles electrons from NADH, via FMN and iron-sulfur (Fe-S) centers, to quinones in the respiratory chain. The immediate electron acceptor for the enzyme in this species is believed to be ubiquinone. Couples the redox reaction to proton translocation (for every two electrons transferred, four hydrogen ions are translocated across the cytoplasmic membrane), and thus conserves the redox energy in a proton gradient. The chain is NADH-quinone oxidoreductase subunit D from Ehrlichia chaffeensis (strain ATCC CRL-10679 / Arkansas).